The sequence spans 445 residues: UDP-N-acetylmuramoylalanine--D-glutamate ligase (445 aa).

G111–T117 serves as a coordination point for ATP.

This sequence belongs to the MurCDEF family.

Its subcellular location is the cytoplasm. The catalysed reaction is UDP-N-acetyl-alpha-D-muramoyl-L-alanine + D-glutamate + ATP = UDP-N-acetyl-alpha-D-muramoyl-L-alanyl-D-glutamate + ADP + phosphate + H(+). It participates in cell wall biogenesis; peptidoglycan biosynthesis. Functionally, cell wall formation. Catalyzes the addition of glutamate to the nucleotide precursor UDP-N-acetylmuramoyl-L-alanine (UMA). The chain is UDP-N-acetylmuramoylalanine--D-glutamate ligase (murD) from Rickettsia prowazekii (strain Madrid E).